A 436-amino-acid chain; its full sequence is MLDFNIEGLIPKNMEKRGELVLNEYLKEIEDVFNHRKIPENGIDDEKIKLFLKFLSMMDTDKDPKSVRIGEREARTYSKIHEELSSGFCHGIGRSGNLVDPQPKASGASIMYALTNKILESFFKQLGLNVHAIATPISTGMSISLCLSAARKKYGSNVVIYPYASHKSPIKAVSFVGMNMRLVETVLDGDRVYVPVEDIENAIKKEIELGNRPCVLSTLTFFPPRNSDDIVEIAKICENYDIPHIINGAYAIQNNYYLEKLKKAFKYRVDAVVSSSDKNLLTPIGGGLVYSTDAEFIKEISLSYPGRASATPVVNTLVSLLSMGSKNYLELVKNQKNSKKLLDELLNDLSKKTGGKFLDVESPIASCISVNSDPVEIAAKLYNLRVTGPRGIKKTDHFGNCYLGTYTHDYIVMNAAIGVRTEDIVNSVSKLEKILL.

The tract at residues 1-44 is tetramerization; that stretch reads MLDFNIEGLIPKNMEKRGELVLNEYLKEIEDVFNHRKIPENGID. A pyridoxal 5'-phosphate-binding site is contributed by arginine 72. Positions 93–103 are phosphate loop (P-loop); sequence GRSGNLVDPQP. Substrate-binding residues include arginine 94, serine 95, and glutamine 102. At lysine 278 the chain carries N6-(pyridoxal phosphate)lysine. Arginine 307 serves as a coordination point for substrate.

The protein belongs to the SepSecS family. As to quaternary structure, homotetramer. Requires pyridoxal 5'-phosphate as cofactor.

The enzyme catalyses O-phospho-L-seryl-tRNA(Sec) + selenophosphate + H2O = L-selenocysteinyl-tRNA(Sec) + 2 phosphate. The protein operates within aminoacyl-tRNA biosynthesis; selenocysteinyl-tRNA(Sec) biosynthesis; selenocysteinyl-tRNA(Sec) from L-seryl-tRNA(Sec) (archaeal/eukaryal route): step 2/2. Converts O-phosphoseryl-tRNA(Sec) to selenocysteinyl-tRNA(Sec) required for selenoprotein biosynthesis. The sequence is that of O-phosphoseryl-tRNA(Sec) selenium transferase (spcS) from Methanococcus maripaludis (strain DSM 14266 / JCM 13030 / NBRC 101832 / S2 / LL).